The sequence spans 344 residues: Ferredoxin--NADP reductase (344 aa).

FAD contacts are provided by Ser-12, Asp-31, Lys-39, Tyr-43, Val-83, Ile-118, Asp-285, and Ser-326.

The protein belongs to the ferredoxin--NADP reductase type 2 family. Homodimer. Requires FAD as cofactor.

It catalyses the reaction 2 reduced [2Fe-2S]-[ferredoxin] + NADP(+) + H(+) = 2 oxidized [2Fe-2S]-[ferredoxin] + NADPH. The polypeptide is Ferredoxin--NADP reductase (Staphylococcus aureus (strain MW2)).